The sequence spans 494 residues: UPF0371 protein M28_Spy1076 (494 aa).

This sequence belongs to the UPF0371 family.

The chain is UPF0371 protein M28_Spy1076 from Streptococcus pyogenes serotype M28 (strain MGAS6180).